The following is a 158-amino-acid chain: Peroxidase (158 aa).

Pro2 is a binding site for substrate. His32 lines the heme b pocket. Thr33 provides a ligand contact to Ca(2+). Cysteines 39 and 64 form a disulfide. Asn48 is a glycosylation site (N-linked (GlcNAc...) asparagine). Ca(2+) contacts are provided by Asp78, Thr81, and Asp86.

This sequence belongs to the peroxidase family. Classical plant (class III) peroxidase subfamily. The cofactor is Ca(2+). It depends on heme b as a cofactor.

It carries out the reaction 2 a phenolic donor + H2O2 = 2 a phenolic radical donor + 2 H2O. In terms of biological role, removal of H(2)O(2), oxidation of toxic reductants, biosynthesis and degradation of lignin, suberization, auxin catabolism, response to environmental stresses such as wounding, pathogen attack and oxidative stress. These functions might be dependent on each isozyme/isoform in each plant tissue. This is Peroxidase from Lupinus polyphyllus (Large-leaved lupine).